The chain runs to 466 residues: Eukaryotic translation initiation factor 3 subunit M (466 aa).

Residues E40–Q62 are disordered. A PCI domain is found at A211–Y378. The interval A424 to E466 is disordered. Positions S433 to R443 are enriched in basic and acidic residues. Positions Q451–Q460 are enriched in low complexity.

Belongs to the eIF-3 subunit M family. As to quaternary structure, component of the eukaryotic translation initiation factor 3 (eIF-3) complex.

The protein resides in the cytoplasm. In terms of biological role, component of the eukaryotic translation initiation factor 3 (eIF-3) complex, which is involved in protein synthesis of a specialized repertoire of mRNAs and, together with other initiation factors, stimulates binding of mRNA and methionyl-tRNAi to the 40S ribosome. The eIF-3 complex specifically targets and initiates translation of a subset of mRNAs involved in cell proliferation. This Aspergillus oryzae (strain ATCC 42149 / RIB 40) (Yellow koji mold) protein is Eukaryotic translation initiation factor 3 subunit M.